A 330-amino-acid chain; its full sequence is Beta-1,6-galactofuranosyltransferase WbbI (330 aa).

Its subcellular location is the cytoplasm. It participates in bacterial outer membrane biogenesis; lipopolysaccharide biosynthesis. Its function is as follows. Involved in the transfer of galactofuranose (Galf) onto an alpha-D-gluco-configured acceptor substrate to form a beta-1,6-linkage. It uses n-octyl alpha-D-glucopyranoside as an acceptor substrate for the addition of galactofuranose from the donor substrate UDP-galactofuranose. It is not able to use beta-D-glucopyranoside isomers. In Escherichia coli (strain K12), this protein is Beta-1,6-galactofuranosyltransferase WbbI (wbbI).